Reading from the N-terminus, the 146-residue chain is MKLHELRAAEGANKASKRVGRGTGSGLGKTSGKGQNGQNSRSGGGVRPGFEGGQMPLYRRLPKRGFKNIFAKEYAAINLDRLNCFEDGTVVTPELLVEKRVVKKVKDGVKILGNGNIEKKLTVKAAKFSKSAIEKIEAAGGKVEVI.

Residues Met-1–Pro-56 are disordered. 2 stretches are compositionally biased toward gly residues: residues Arg-21–Gln-35 and Ser-42–Gly-52.

The protein belongs to the universal ribosomal protein uL15 family. In terms of assembly, part of the 50S ribosomal subunit.

Binds to the 23S rRNA. In Clostridium botulinum (strain Loch Maree / Type A3), this protein is Large ribosomal subunit protein uL15.